The chain runs to 532 residues: Pre-rRNA-processing protein pro-1 (532 aa).

WD repeat units lie at residues 136–175 (AHYQ…SADR) and 287–326 (GHSD…CLKV). A disordered region spans residues 435–464 (TLGDDEDDAPEVGNQRRQNKKNNKKNRKLQ). A coiled-coil region spans residues 445 to 526 (EVGNQRRQNK…INRQMYEFVA (82 aa)). Residues 451–464 (RQNKKNNKKNRKLQ) show a composition bias toward basic residues.

Belongs to the WD repeat IPI3/WDR18 family. Component of the PELP1 complex, composed of at least PELP1, TEX10 and WDR18. The complex interacts with pre-60S ribosome particles.

The protein resides in the nucleus. It is found in the nucleolus. Its subcellular location is the nucleoplasm. In terms of biological role, component of the PELP1 complex involved in the nucleolar steps of 28S rRNA maturation and the subsequent nucleoplasmic transit of the pre-60S ribosomal subunit. Required for processing ITS2 sequences from rRNA intermediates during 26S rRNA maturation. Required in the soma to promote normal proliferation and prevent germline tumor formation. This chain is Pre-rRNA-processing protein pro-1 (pro-1), found in Caenorhabditis briggsae.